The following is a 398-amino-acid chain: Acetate kinase (398 aa).

Asn-9 provides a ligand contact to Mg(2+). Lys-16 is an ATP binding site. Arg-90 lines the substrate pocket. The active-site Proton donor/acceptor is the Asp-147. Residues His-207 to Gly-211, Asp-282 to Arg-284, and Gly-330 to Asn-334 each bind ATP. Glu-384 is a Mg(2+) binding site.

It belongs to the acetokinase family. Homodimer. Mg(2+) serves as cofactor. It depends on Mn(2+) as a cofactor.

Its subcellular location is the cytoplasm. It catalyses the reaction acetate + ATP = acetyl phosphate + ADP. Its pathway is metabolic intermediate biosynthesis; acetyl-CoA biosynthesis; acetyl-CoA from acetate: step 1/2. Its function is as follows. Catalyzes the formation of acetyl phosphate from acetate and ATP. Can also catalyze the reverse reaction. This chain is Acetate kinase, found in Staphylococcus carnosus (strain TM300).